The following is a 124-amino-acid chain: MKPGAIQVAKGIITINEGRKTLEVSVTNNGTRSVQVGSHFHFAEANGALSFNRDKAIGMRLDIPSGTSVRFEPGEEKTVTLVEIGGRKTVRGLNGMADTYMDERGKEKTLSNLKKAGWMEEAIR.

The protein belongs to the urease beta subunit family. As to quaternary structure, heterotrimer of UreA (gamma), UreB (beta) and UreC (alpha) subunits. Three heterotrimers associate to form the active enzyme.

The protein resides in the cytoplasm. The enzyme catalyses urea + 2 H2O + H(+) = hydrogencarbonate + 2 NH4(+). The protein operates within nitrogen metabolism; urea degradation; CO(2) and NH(3) from urea (urease route): step 1/1. The sequence is that of Urease subunit beta from Bacillus velezensis (strain DSM 23117 / BGSC 10A6 / LMG 26770 / FZB42) (Bacillus amyloliquefaciens subsp. plantarum).